Reading from the N-terminus, the 117-residue chain is Large ribosomal subunit protein bL20 (117 aa).

The protein belongs to the bacterial ribosomal protein bL20 family.

Binds directly to 23S ribosomal RNA and is necessary for the in vitro assembly process of the 50S ribosomal subunit. It is not involved in the protein synthesizing functions of that subunit. The polypeptide is Large ribosomal subunit protein bL20 (Histophilus somni (strain 129Pt) (Haemophilus somnus)).